The sequence spans 223 residues: MCCSILHHRNPRREHEFPAVVTSPVTENHIFLGGAGERGLTINGTFIKFTCIGVYLEDKADKSLATKWEGKLEELLETLDFYRDIISGPFEKLIRRSKIKELSGPEYSRKVMENCVAHLKSVGTYGDAEVEAIQNLQKLSRMLIFHLVLLKKNRQSPDGILGLSSSKDISIPEKEDAIIENKAASSAVLETMIGEHAVSPDLKRCLAARLPALLNEGTFKIGN.

T50, N114, and T191 together coordinate substrate.

Belongs to the chalcone isomerase family.

The enzyme catalyses a chalcone = a flavanone.. Its pathway is secondary metabolite biosynthesis; flavonoid biosynthesis. In terms of biological role, catalyzes the intramolecular cyclization of bicyclic chalcones into tricyclic (S)-flavanones. Responsible for the isomerization of 4,2',4',6'-tetrahydroxychalcone (also termed chalcone) into naringenin. In Pisum sativum (Garden pea), this protein is Chalcone--flavanone isomerase (CHI).